Reading from the N-terminus, the 474-residue chain is tRNA modification GTPase MnmE (474 aa).

(6S)-5-formyl-5,6,7,8-tetrahydrofolate-binding residues include Arg28, Glu92, and Arg131. The 169-residue stretch at 227–395 (GIPVAIVGTT…LKGELTQIME (169 aa)) folds into the TrmE-type G domain. K(+) is bound at residue Asn237. GTP contacts are provided by residues 237-242 (NVGKST), 256-262 (SDIHGTT), 281-284 (DTAG), and 376-378 (SAR). Residue Ser241 coordinates Mg(2+). K(+)-binding residues include Ser256, Ile258, and Thr261. A Mg(2+)-binding site is contributed by Thr262. Lys474 is a (6S)-5-formyl-5,6,7,8-tetrahydrofolate binding site.

It belongs to the TRAFAC class TrmE-Era-EngA-EngB-Septin-like GTPase superfamily. TrmE GTPase family. Homodimer. Heterotetramer of two MnmE and two MnmG subunits. The cofactor is K(+).

It localises to the cytoplasm. Exhibits a very high intrinsic GTPase hydrolysis rate. Involved in the addition of a carboxymethylaminomethyl (cmnm) group at the wobble position (U34) of certain tRNAs, forming tRNA-cmnm(5)s(2)U34. This is tRNA modification GTPase MnmE from Porphyromonas gingivalis (strain ATCC BAA-308 / W83).